The primary structure comprises 931 residues: Bifunctional uridylyltransferase/uridylyl-removing enzyme (931 aa).

The uridylyltransferase stretch occupies residues 1–383; that stretch reads MDSVTPNSRP…KTGNSWRRVP (383 aa). Residues 384 to 739 form a uridylyl-removing region; that stretch reads ESDDFIVDNN…VGFDPARGVT (356 aa). Residues 499–622 enclose the HD domain; that stretch reads VDEHLIRCIG…VQSVEQMKLL (124 aa). ACT domains are found at residues 740 to 822 and 851 to 931; these read ELTI…AVAR and VIEV…QPAA.

This sequence belongs to the GlnD family. It depends on Mg(2+) as a cofactor.

It carries out the reaction [protein-PII]-L-tyrosine + UTP = [protein-PII]-uridylyl-L-tyrosine + diphosphate. The enzyme catalyses [protein-PII]-uridylyl-L-tyrosine + H2O = [protein-PII]-L-tyrosine + UMP + H(+). Its activity is regulated as follows. Uridylyltransferase (UTase) activity is inhibited by glutamine, while glutamine activates uridylyl-removing (UR) activity. Functionally, modifies, by uridylylation and deuridylylation, the PII regulatory proteins (GlnB and homologs), in response to the nitrogen status of the cell that GlnD senses through the glutamine level. Under low glutamine levels, catalyzes the conversion of the PII proteins and UTP to PII-UMP and PPi, while under higher glutamine levels, GlnD hydrolyzes PII-UMP to PII and UMP (deuridylylation). Thus, controls uridylylation state and activity of the PII proteins, and plays an important role in the regulation of nitrogen fixation and metabolism. This chain is Bifunctional uridylyltransferase/uridylyl-removing enzyme, found in Bradyrhizobium sp. (strain BTAi1 / ATCC BAA-1182).